We begin with the raw amino-acid sequence, 556 residues long: Formate--tetrahydrofolate ligase (556 aa).

Position 65–72 (65–72 (TPAGEGKS)) interacts with ATP.

This sequence belongs to the formate--tetrahydrofolate ligase family.

It catalyses the reaction (6S)-5,6,7,8-tetrahydrofolate + formate + ATP = (6R)-10-formyltetrahydrofolate + ADP + phosphate. It functions in the pathway one-carbon metabolism; tetrahydrofolate interconversion. This Streptococcus pneumoniae (strain Hungary19A-6) protein is Formate--tetrahydrofolate ligase.